Here is a 120-residue protein sequence, read N- to C-terminus: NAD(P)H-quinone oxidoreductase subunit 3, chloroplastic (120 aa).

Helical transmembrane passes span 9–29 (IFWA…FVSG), 64–84 (MFAL…PWAM), and 88–108 (VLGI…IVGL).

This sequence belongs to the complex I subunit 3 family. In terms of assembly, NDH is composed of at least 16 different subunits, 5 of which are encoded in the nucleus.

It localises to the plastid. It is found in the chloroplast thylakoid membrane. The enzyme catalyses a plastoquinone + NADH + (n+1) H(+)(in) = a plastoquinol + NAD(+) + n H(+)(out). The catalysed reaction is a plastoquinone + NADPH + (n+1) H(+)(in) = a plastoquinol + NADP(+) + n H(+)(out). NDH shuttles electrons from NAD(P)H:plastoquinone, via FMN and iron-sulfur (Fe-S) centers, to quinones in the photosynthetic chain and possibly in a chloroplast respiratory chain. The immediate electron acceptor for the enzyme in this species is believed to be plastoquinone. Couples the redox reaction to proton translocation, and thus conserves the redox energy in a proton gradient. This chain is NAD(P)H-quinone oxidoreductase subunit 3, chloroplastic, found in Daucus carota (Wild carrot).